A 233-amino-acid polypeptide reads, in one-letter code: Orotidine 5'-phosphate decarboxylase (233 aa).

Substrate is bound by residues Asp-11, Lys-33, 60-69 (DLKFHDIPNT), Thr-120, Arg-181, Gln-190, Gly-210, and Arg-211. The active-site Proton donor is Lys-62.

It belongs to the OMP decarboxylase family. Type 1 subfamily. As to quaternary structure, homodimer.

The enzyme catalyses orotidine 5'-phosphate + H(+) = UMP + CO2. It functions in the pathway pyrimidine metabolism; UMP biosynthesis via de novo pathway; UMP from orotate: step 2/2. In terms of biological role, catalyzes the decarboxylation of orotidine 5'-monophosphate (OMP) to uridine 5'-monophosphate (UMP). This chain is Orotidine 5'-phosphate decarboxylase, found in Vibrio parahaemolyticus serotype O3:K6 (strain RIMD 2210633).